A 369-amino-acid polypeptide reads, in one-letter code: Nuclear hormone receptor family member nhr-64 (369 aa).

Positions 67 to 142 form a DNA-binding region, nuclear receptor; sequence EKCQVDKAKR…ASTRGLRTTV (76 aa). 2 consecutive NR C4-type zinc fingers follow at residues 70 to 90 and 106 to 130; these read QVDKAKRNSCRKCRFDVCLRK and PANPLSNGSNGGIVPDDPLLDTLIR. One can recognise an NR LBD domain in the interval 120-352; that stretch reads PDDPLLDTLI…NLMLELMLPN (233 aa).

Belongs to the nuclear hormone receptor family.

The protein resides in the nucleus. Orphan nuclear receptor. This is Nuclear hormone receptor family member nhr-64 (nhr-64) from Caenorhabditis elegans.